The chain runs to 117 residues: Transcription elongation factor SPT4 (117 aa).

An interaction with SUPT5H region spans residues 1 to 40 (MALETVPKDLRHLRACLLCSLVKTIDQFEYDGCDNCDAYL). The C4-type zinc finger occupies 16–36 (CLLCSLVKTIDQFEYDGCDNC).

Belongs to the SPT4 family. Interacts with SUPT5H to form the DSIF complex. DSIF interacts with RNA polymerase II and with the positive transcription elongation factor b complex (P-TEFb complex), which is composed of CDK9 and cyclin-T.

It localises to the nucleus. In terms of biological role, may function as a component of the DRB sensitivity-inducing factor complex (DSIF complex), which regulates transcription elongation by RNA polymerase II. Probably enhances transcriptional pausing at sites proximal to the promoter, which may in turn facilitate the assembly of an elongation competent RNA polymerase II complex. The protein is Transcription elongation factor SPT4 (supt4h1) of Xenopus laevis (African clawed frog).